The following is a 481-amino-acid chain: Aspartyl/glutamyl-tRNA(Asn/Gln) amidotransferase subunit B (481 aa).

It belongs to the GatB/GatE family. GatB subfamily. As to quaternary structure, heterotrimer of A, B and C subunits.

It catalyses the reaction L-glutamyl-tRNA(Gln) + L-glutamine + ATP + H2O = L-glutaminyl-tRNA(Gln) + L-glutamate + ADP + phosphate + H(+). It carries out the reaction L-aspartyl-tRNA(Asn) + L-glutamine + ATP + H2O = L-asparaginyl-tRNA(Asn) + L-glutamate + ADP + phosphate + 2 H(+). In terms of biological role, allows the formation of correctly charged Asn-tRNA(Asn) or Gln-tRNA(Gln) through the transamidation of misacylated Asp-tRNA(Asn) or Glu-tRNA(Gln) in organisms which lack either or both of asparaginyl-tRNA or glutaminyl-tRNA synthetases. The reaction takes place in the presence of glutamine and ATP through an activated phospho-Asp-tRNA(Asn) or phospho-Glu-tRNA(Gln). The protein is Aspartyl/glutamyl-tRNA(Asn/Gln) amidotransferase subunit B of Pseudomonas putida (strain ATCC 47054 / DSM 6125 / CFBP 8728 / NCIMB 11950 / KT2440).